Here is a 332-residue protein sequence, read N- to C-terminus: MKTLGEFIVEKQHEFSHATGELTALLSAIKLGAKIIHRDINKAGLVDILGASGVENVQGETQQKLDLFANEKLKAALKARDIVAGIASEEEDEIVVFEGCEHAKYVVLMDPLDGSSNIDVNVSVGTIFSIYRRVTPVGTPVTMEDFLQPGSQQVAAGYVVYGSSTMLVYTTGCGVHAFTYDPSLGVFCLCQERMRFPQSGNTYSINEGNYIKFPMGVKKYIKYCQEEDKATQRPYTSRYIGSLVADFHRNLLKGGIYLYPSTASHPEGKLRLLYECNPMAFLAEQAGGKASDGKQRILDIKPDSLHQRRPFFVGTEQMVNDVERFIREFPDA.

Positions 89, 110, 112, and 113 each coordinate Mg(2+). Residues 113 to 116 (DGSS), Asn206, Tyr239, 257 to 259 (YLY), and Lys269 each bind substrate. Glu275 contributes to the Mg(2+) binding site.

This sequence belongs to the FBPase class 1 family. Homotetramer. Mg(2+) is required as a cofactor.

Its subcellular location is the cytoplasm. It carries out the reaction beta-D-fructose 1,6-bisphosphate + H2O = beta-D-fructose 6-phosphate + phosphate. The protein operates within carbohydrate biosynthesis; gluconeogenesis. The polypeptide is Fructose-1,6-bisphosphatase class 1 (Cronobacter sakazakii (strain ATCC BAA-894) (Enterobacter sakazakii)).